Reading from the N-terminus, the 222-residue chain is Fibrillarin-like rRNA/tRNA 2'-O-methyltransferase (222 aa).

Residues 86–87 (TT), 104–105 (EV), 129–130 (DA), and 149–152 (DISQ) each bind S-adenosyl-L-methionine.

This sequence belongs to the methyltransferase superfamily. Fibrillarin family. In terms of assembly, interacts with nop5. Component of box C/D small ribonucleoprotein (sRNP) particles that contain rpl7ae, FlpA and nop5, plus a guide RNA.

In terms of biological role, involved in pre-rRNA and tRNA processing. Utilizes the methyl donor S-adenosyl-L-methionine to catalyze the site-specific 2'-hydroxyl methylation of ribose moieties in rRNA and tRNA. Site specificity is provided by a guide RNA that base pairs with the substrate. Methylation occurs at a characteristic distance from the sequence involved in base pairing with the guide RNA. The chain is Fibrillarin-like rRNA/tRNA 2'-O-methyltransferase from Thermoplasma volcanium (strain ATCC 51530 / DSM 4299 / JCM 9571 / NBRC 15438 / GSS1).